The chain runs to 57 residues: Dendroaspis polylepis MT9 (57 aa).

4 disulfides stabilise this stretch: cysteine 3–cysteine 22, cysteine 17–cysteine 36, cysteine 38–cysteine 49, and cysteine 50–cysteine 55.

Belongs to the three-finger toxin family. Short-chain subfamily. Expressed by the venom gland.

It localises to the secreted. Functionally, when tested on muscarinic GPCR, specifically antagonizes the type 2 receptor (CHRM2) subtype (Ki/Kd=120-399 nM). Ex vivo, it reverses the M2R-agonist-induced relaxation in rat and human arteries. In Dendroaspis polylepis polylepis (Black mamba), this protein is Dendroaspis polylepis MT9.